The sequence spans 152 residues: Ribonuclease HI (152 aa).

The 142-residue stretch at 1 to 142 folds into the RNase H type-1 domain; that stretch reads MDSKVVIYTD…ADKLAVQGRE (142 aa). Mg(2+) contacts are provided by Asp10, Glu48, Asp70, and Asp134.

The protein belongs to the RNase H family. In terms of assembly, monomer. Mg(2+) is required as a cofactor.

The protein localises to the cytoplasm. It carries out the reaction Endonucleolytic cleavage to 5'-phosphomonoester.. Functionally, endonuclease that specifically degrades the RNA of RNA-DNA hybrids. This Rickettsia prowazekii (strain Madrid E) protein is Ribonuclease HI (rnhA).